A 366-amino-acid polypeptide reads, in one-letter code: tRNA pseudouridine synthase B (366 aa).

The tract at residues 1–55 (MTVTTPDALLAPHDVQHAGADESAAQIRKPRDNNDPRNANRGGGNGKPRRDKRDV) is disordered. Catalysis depends on D92, which acts as the Nucleophile.

This sequence belongs to the pseudouridine synthase TruB family. Type 1 subfamily.

The enzyme catalyses uridine(55) in tRNA = pseudouridine(55) in tRNA. Responsible for synthesis of pseudouridine from uracil-55 in the psi GC loop of transfer RNAs. The polypeptide is tRNA pseudouridine synthase B (Rhodopseudomonas palustris (strain ATCC BAA-98 / CGA009)).